We begin with the raw amino-acid sequence, 370 residues long: 3-hydroxy-3-methylglutaryl-CoA lyase, cytoplasmic (370 aa).

Glycine 2 carries the N-myristoyl glycine lipid modification. Residues 78–345 (VKIVEVGPRD…NTGVNLYKVM (268 aa)) form the Pyruvate carboxyltransferase domain. Arginine 86 contacts substrate. Positions 87, 278, and 280 each coordinate a divalent metal cation. Cysteine 311 is a catalytic residue. Asparagine 320 is an a divalent metal cation binding site.

It belongs to the HMG-CoA lyase family. A divalent metal cation serves as cofactor.

The protein resides in the cytoplasm. It localises to the cytosol. The protein localises to the endoplasmic reticulum membrane. The enzyme catalyses (3S)-3-hydroxy-3-methylglutaryl-CoA = acetoacetate + acetyl-CoA. It functions in the pathway metabolic intermediate metabolism; (S)-3-hydroxy-3-methylglutaryl-CoA degradation; acetoacetate from (S)-3-hydroxy-3-methylglutaryl-CoA: step 1/1. Its function is as follows. Non-mitochondrial 3-hydroxy-3-methylglutaryl-CoA lyase that catalyzes a cation-dependent cleavage of (S)-3-hydroxy-3-methylglutaryl-CoA into acetyl-CoA and acetoacetate, a key step in ketogenesis, the products of which support energy production in nonhepatic animal tissues. The polypeptide is 3-hydroxy-3-methylglutaryl-CoA lyase, cytoplasmic (HMGCLL1) (Homo sapiens (Human)).